The chain runs to 153 residues: Ribosome maturation factor RimP (153 aa).

The protein belongs to the RimP family.

Its subcellular location is the cytoplasm. Functionally, required for maturation of 30S ribosomal subunits. The sequence is that of Ribosome maturation factor RimP from Burkholderia pseudomallei (strain 1710b).